The following is a 158-amino-acid chain: Transcription elongation factor GreA (158 aa).

It belongs to the GreA/GreB family.

Functionally, necessary for efficient RNA polymerase transcription elongation past template-encoded arresting sites. The arresting sites in DNA have the property of trapping a certain fraction of elongating RNA polymerases that pass through, resulting in locked ternary complexes. Cleavage of the nascent transcript by cleavage factors such as GreA or GreB allows the resumption of elongation from the new 3'terminus. GreA releases sequences of 2 to 3 nucleotides. This is Transcription elongation factor GreA from Agrobacterium fabrum (strain C58 / ATCC 33970) (Agrobacterium tumefaciens (strain C58)).